Reading from the N-terminus, the 1574-residue chain is Multiple epidermal growth factor-like domains protein 6 (1574 aa).

The first 27 residues, Met-1–Ala-27, serve as a signal peptide directing secretion. The region spanning Met-40–Ser-122 is the EMI domain. Disulfide bonds link Cys-44/Cys-108, Cys-74/Cys-80, Cys-107/Cys-120, Cys-127/Cys-138, Cys-134/Cys-147, Cys-149/Cys-162, Cys-168/Cys-179, Cys-175/Cys-188, Cys-190/Cys-203, Cys-209/Cys-220, Cys-216/Cys-230, Cys-232/Cys-245, Cys-251/Cys-262, Cys-258/Cys-271, Cys-273/Cys-286, Cys-292/Cys-303, Cys-299/Cys-312, Cys-314/Cys-327, Cys-338/Cys-349, Cys-345/Cys-358, Cys-360/Cys-373, Cys-379/Cys-389, Cys-385/Cys-398, Cys-400/Cys-411, Cys-419/Cys-430, Cys-426/Cys-439, Cys-441/Cys-454, Cys-524/Cys-537, Cys-531/Cys-544, Cys-546/Cys-555, Cys-568/Cys-580, Cys-574/Cys-587, Cys-589/Cys-598, Cys-611/Cys-623, Cys-617/Cys-630, Cys-632/Cys-641, Cys-654/Cys-668, Cys-660/Cys-675, Cys-677/Cys-686, Cys-699/Cys-711, Cys-705/Cys-718, Cys-722/Cys-731, Cys-744/Cys-755, Cys-750/Cys-762, Cys-764/Cys-773, Cys-786/Cys-799, Cys-793/Cys-806, Cys-808/Cys-817, Cys-830/Cys-842, Cys-836/Cys-849, Cys-851/Cys-860, Cys-873/Cys-886, Cys-879/Cys-893, Cys-895/Cys-904, Cys-917/Cys-929, Cys-923/Cys-936, Cys-938/Cys-947, Cys-960/Cys-972, Cys-966/Cys-979, Cys-981/Cys-990, Cys-1003/Cys-1015, Cys-1009/Cys-1022, Cys-1024/Cys-1033, Cys-1046/Cys-1058, Cys-1052/Cys-1065, Cys-1067/Cys-1076, Cys-1089/Cys-1101, Cys-1095/Cys-1108, Cys-1110/Cys-1119, Cys-1132/Cys-1144, Cys-1138/Cys-1151, Cys-1153/Cys-1162, Cys-1175/Cys-1187, Cys-1181/Cys-1194, Cys-1196/Cys-1205, Cys-1218/Cys-1231, Cys-1224/Cys-1238, Cys-1240/Cys-1249, Cys-1262/Cys-1274, Cys-1268/Cys-1281, Cys-1283/Cys-1292, Cys-1305/Cys-1317, Cys-1311/Cys-1324, Cys-1326/Cys-1335, Cys-1348/Cys-1360, Cys-1354/Cys-1367, Cys-1369/Cys-1378, Cys-1391/Cys-1403, Cys-1397/Cys-1410, Cys-1412/Cys-1421, Cys-1434/Cys-1446, Cys-1440/Cys-1453, Cys-1455/Cys-1464, Cys-1477/Cys-1489, Cys-1483/Cys-1496, Cys-1498/Cys-1507, Cys-1520/Cys-1532, Cys-1526/Cys-1539, and Cys-1541/Cys-1550. Residues Asp-123–Gln-163 enclose the EGF-like 1; calcium-binding domain. An EGF-like 2; calcium-binding domain is found at Asp-164–Leu-204. EGF-like domains lie at Ala-205–Val-246 and Arg-247–Glu-287. One can recognise an EGF-like 5; calcium-binding domain in the interval Asp-288–Tyr-328. EGF-like domains lie at Ile-334–Ile-374 and Asp-375–Gly-412. The region spanning Asp-415–Thr-455 is the EGF-like 8; calcium-binding domain. 24 consecutive EGF-like domains span residues Phe-520 to Asn-556, Phe-564 to Glu-599, Tyr-607 to His-642, Phe-650 to Gln-687, Phe-695 to Gly-732, Phe-740 to Gly-774, Trp-782 to Gln-818, Tyr-826 to Gln-861, Trp-869 to Glu-905, Tyr-913 to Glu-948, Phe-956 to Ala-991, Phe-999 to Leu-1034, Tyr-1042 to Glu-1077, Tyr-1085 to Gln-1120, Phe-1128 to Glu-1163, Phe-1171 to Glu-1206, Phe-1214 to Leu-1250, Tyr-1258 to Ser-1293, Phe-1301 to Glu-1336, Phe-1344 to Glu-1379, Tyr-1387 to Glu-1422, His-1430 to Glu-1465, Phe-1473 to Asp-1508, and Phe-1516 to Arg-1551. Residues Thr-1555–Ser-1568 show a composition bias toward polar residues. The interval Thr-1555–His-1574 is disordered.

As to expression, expressed in lung.

Its subcellular location is the secreted. This chain is Multiple epidermal growth factor-like domains protein 6 (Megf6), found in Rattus norvegicus (Rat).